The following is a 613-amino-acid chain: Azole resistance protein 1 (613 aa).

The interval 1–38 is disordered; sequence MKGEPKTYSMSDLSYYGEKAQQQNEKQQKQYVVRRNST. Residues 1-70 are Extracellular-facing; sequence MKGEPKTYSM…PKGFILYASL (70 aa). A helical membrane pass occupies residues 71 to 91; the sequence is IALALSLFLAALDIMIVSTII. Residues 92-102 lie on the Cytoplasmic side of the membrane; it reads EEVAKQFGSYS. Residues 103–123 form a helical membrane-spanning segment; sequence EIGWLFTGYSLPNALLALIWG. At 124 to 134 the chain is on the extracellular side; that stretch reads RIATPIGFKET. The chain crosses the membrane as a helical span at residues 135–155; the sequence is MLFAIVIFEIGSLISALANSM. At 156-163 the chain is on the cytoplasmic side; sequence SMLIGGRV. The chain crosses the membrane as a helical span at residues 164–184; that stretch reads IAGVGGCGIQSLSFVIGSTLV. The Extracellular segment spans residues 185-189; sequence EESQR. The helical transmembrane segment at 190–210 threads the bilayer; the sequence is GILIAVLSCSFAIASVVGPFL. The Cytoplasmic portion of the chain corresponds to 211-221; the sequence is GGVFTSSVTWR. Residues 222 to 242 form a helical membrane-spanning segment; that stretch reads WCFYVNLPIGGLAFFLFLFFY. Residues 243 to 298 are Extracellular-facing; it reads NPGLSTFQETMDNIRKFPSQFIEIVRNVAYHLLKIKGFSKLNGWRKPFMELIFMYD. A helical membrane pass occupies residues 299-319; that stretch reads IIEFVFCSAGFTCILLAFTFG. Residues 320–329 lie on the Cytoplasmic side of the membrane; sequence GNRYAWNSAS. Residues 330–350 traverse the membrane as a helical segment; the sequence is IIILFIIGIVLVVLAGIYDFL. At 351-375 the chain is on the extracellular side; it reads VFPKFNIVKATPHYQPLMSWTNIKK. Residues 376 to 396 form a helical membrane-spanning segment; that stretch reads PGIFTVNIALFLTCAGYISQF. The Cytoplasmic portion of the chain corresponds to 397–414; that stretch reads TYIVQYFQLIYNDSAWRA. Residues 415–435 form a helical membrane-spanning segment; that stretch reads AVHLVACIISTVVTAILCGAI. Over 436–443 the chain is Extracellular; sequence TDKTRQIK. A helical transmembrane segment spans residues 444–464; that stretch reads PIIVISSIFGVVGAGILTLLN. Topologically, residues 465 to 472 are cytoplasmic; sequence NNANNSAH. The chain crosses the membrane as a helical span at residues 473 to 493; the sequence is IGLLILPGVAFGGLAQSSMLA. Residues 494–581 are Extracellular-facing; it reads SQIQLDKKSP…SKLGNIISES (88 aa). The chain crosses the membrane as a helical span at residues 582-602; sequence LTDVFYMALGFYALSLIFAVF. Topologically, residues 603–613 are cytoplasmic; it reads ASNKKVTASLR.

The protein belongs to the major facilitator superfamily.

It localises to the cell membrane. Transporter protein required for adaptation to high stress imposed by low-chain organic acids, in particular by acetic acid, and for resistance to azoles, especially to ketoconazole and fluconazole. The chain is Azole resistance protein 1 (AZR1) from Saccharomyces cerevisiae (strain ATCC 204508 / S288c) (Baker's yeast).